Consider the following 556-residue polypeptide: Formate--tetrahydrofolate ligase (556 aa).

Residue 65-72 (TPAGEGKT) participates in ATP binding.

This sequence belongs to the formate--tetrahydrofolate ligase family.

It carries out the reaction (6S)-5,6,7,8-tetrahydrofolate + formate + ATP = (6R)-10-formyltetrahydrofolate + ADP + phosphate. It functions in the pathway one-carbon metabolism; tetrahydrofolate interconversion. In Acetivibrio thermocellus (strain ATCC 27405 / DSM 1237 / JCM 9322 / NBRC 103400 / NCIMB 10682 / NRRL B-4536 / VPI 7372) (Clostridium thermocellum), this protein is Formate--tetrahydrofolate ligase.